Reading from the N-terminus, the 1160-residue chain is Nck-associated protein 1 homolog (1160 aa).

It belongs to the HEM-1/HEM-2 family. Part of a Scar/WAVE complex containing brk1, scrA, abiA, pirA and napA.

Functionally, involved in regulation of actin and microtubule organization. Involved in cell adhesion. The chain is Nck-associated protein 1 homolog (napA) from Dictyostelium discoideum (Social amoeba).